The following is a 130-amino-acid chain: Large-conductance mechanosensitive channel (130 aa).

A run of 2 helical transmembrane segments spans residues 14 to 34 and 73 to 93; these read IIDL…VTSF and FVDF…LVKF.

The protein belongs to the MscL family. Homopentamer.

It is found in the cell membrane. Channel that opens in response to stretch forces in the membrane lipid bilayer. May participate in the regulation of osmotic pressure changes within the cell. The sequence is that of Large-conductance mechanosensitive channel from Oceanobacillus iheyensis (strain DSM 14371 / CIP 107618 / JCM 11309 / KCTC 3954 / HTE831).